The primary structure comprises 402 residues: Flavohemoprotein (402 aa).

The region spanning 1-138 (MLSPEVRALV…LADLLIGRER (138 aa)) is the Globin domain. Position 85 (histidine 85) interacts with heme b. Catalysis depends on charge relay system residues tyrosine 95 and glutamate 137. Residues 149-402 (GGWTGWRAFK…AEVFGTGGVA (254 aa)) are reductase. Residues 152-261 (TGWRAFKVVR…SPPQGDFTLD (110 aa)) form the FAD-binding FR-type domain. FAD is bound by residues tyrosine 190 and 206–209 (RQYS). 274–279 (GVGLTP) contacts NADP(+). Position 395 to 398 (395 to 398 (VFGT)) interacts with FAD.

Belongs to the globin family. Two-domain flavohemoproteins subfamily. This sequence in the C-terminal section; belongs to the flavoprotein pyridine nucleotide cytochrome reductase family. Requires heme b as cofactor. FAD serves as cofactor.

It catalyses the reaction 2 nitric oxide + NADPH + 2 O2 = 2 nitrate + NADP(+) + H(+). It carries out the reaction 2 nitric oxide + NADH + 2 O2 = 2 nitrate + NAD(+) + H(+). Its function is as follows. Is involved in NO detoxification in an aerobic process, termed nitric oxide dioxygenase (NOD) reaction that utilizes O(2) and NAD(P)H to convert NO to nitrate, which protects the bacterium from various noxious nitrogen compounds. Therefore, plays a central role in the inducible response to nitrosative stress. In Bordetella bronchiseptica (strain ATCC BAA-588 / NCTC 13252 / RB50) (Alcaligenes bronchisepticus), this protein is Flavohemoprotein.